We begin with the raw amino-acid sequence, 356 residues long: MGANVLIMAGGTGGHVFPALACAREFQARGYTVHWLGTPRGIENDLVPAAGLELHRINATGLRGKGKLSLLKAPFMLLKSVWQARAIIRRLRPVCVVGFGGYVTGPGGLAAKLAGVPVIVHEQNAVAGTANRLLVPFAARVCEAFPDTFTLSDSRRTTGNPVRSELFLETPRPALAGRKARLLILGGSLGAEPLNKLLPEALAQVAADLRPEVFHQAGRNHDEVTAERYRAAGVDAQVQPFIKDMAQAYGWADLVVCRAGALTISELAAAGLPSMLVPLPHAIDDHQTRNADYLAREGAAFLMPQRTTGAADLAARLTEVLMQPQRLEQMAQAARRLAKPEATRSVVDTCLEVAHG.

Residues 12–14 (TGG), Asn-124, Arg-163, Ser-188, Ile-242, and Gln-287 contribute to the UDP-N-acetyl-alpha-D-glucosamine site.

Belongs to the glycosyltransferase 28 family. MurG subfamily.

It is found in the cell inner membrane. It catalyses the reaction di-trans,octa-cis-undecaprenyl diphospho-N-acetyl-alpha-D-muramoyl-L-alanyl-D-glutamyl-meso-2,6-diaminopimeloyl-D-alanyl-D-alanine + UDP-N-acetyl-alpha-D-glucosamine = di-trans,octa-cis-undecaprenyl diphospho-[N-acetyl-alpha-D-glucosaminyl-(1-&gt;4)]-N-acetyl-alpha-D-muramoyl-L-alanyl-D-glutamyl-meso-2,6-diaminopimeloyl-D-alanyl-D-alanine + UDP + H(+). It functions in the pathway cell wall biogenesis; peptidoglycan biosynthesis. In terms of biological role, cell wall formation. Catalyzes the transfer of a GlcNAc subunit on undecaprenyl-pyrophosphoryl-MurNAc-pentapeptide (lipid intermediate I) to form undecaprenyl-pyrophosphoryl-MurNAc-(pentapeptide)GlcNAc (lipid intermediate II). In Pseudomonas fluorescens (strain Pf0-1), this protein is UDP-N-acetylglucosamine--N-acetylmuramyl-(pentapeptide) pyrophosphoryl-undecaprenol N-acetylglucosamine transferase.